We begin with the raw amino-acid sequence, 28 residues long: GVACGESCVYLPCFTVGCTCTSSQCFKN.

The segment at residues 1 to 28 is a cross-link (cyclopeptide (Gly-Asn)); sequence GVACGESCVYLPCFTVGCTCTSSQCFKN. 3 disulfide bridges follow: C4–C18, C8–C20, and C13–C25.

It belongs to the cyclotide family. Bracelet subfamily. In terms of processing, this is a cyclic peptide.

Its function is as follows. Probably participates in a plant defense mechanism. In Leonia triandra, this protein is Cyclotide ltri-A.